The sequence spans 162 residues: Endoribonuclease YbeY (162 aa).

The Zn(2+) site is built by His126, His130, and His136.

This sequence belongs to the endoribonuclease YbeY family. It depends on Zn(2+) as a cofactor.

It localises to the cytoplasm. Its function is as follows. Single strand-specific metallo-endoribonuclease involved in late-stage 70S ribosome quality control and in maturation of the 3' terminus of the 16S rRNA. The polypeptide is Endoribonuclease YbeY (Fusobacterium nucleatum subsp. nucleatum (strain ATCC 25586 / DSM 15643 / BCRC 10681 / CIP 101130 / JCM 8532 / KCTC 2640 / LMG 13131 / VPI 4355)).